A 202-amino-acid polypeptide reads, in one-letter code: Adenylyl-sulfate kinase (202 aa).

ATP is bound at residue 35 to 42 (GLSGSGKS). Residue S109 is the Phosphoserine intermediate of the active site.

Belongs to the APS kinase family.

The catalysed reaction is adenosine 5'-phosphosulfate + ATP = 3'-phosphoadenylyl sulfate + ADP + H(+). It functions in the pathway sulfur metabolism; hydrogen sulfide biosynthesis; sulfite from sulfate: step 2/3. Functionally, catalyzes the synthesis of activated sulfate. The chain is Adenylyl-sulfate kinase from Bacteroides fragilis (strain YCH46).